A 377-amino-acid polypeptide reads, in one-letter code: MSKGKIIVAMSGGVDSAVTAGLLMEEGYEVIGVNLRTWEYEAPVCDTTKKSCCSPEDIRDARDVGLSLKIPFYVVKMEKVFQEKVIDRFIDDYQHGKTPNPCVECNTFVKFGALFEKAKALGIDKIATGHYARIVRNGERYAISNGVDIGKNQAYYLYGLSQENLKNVTFPLGGMTKPEVREIARRMGLSVADKAESQEICFIPENDYRKFLEKKHVEFTPGFFKLRDGRIIGKHKGRENFTIGQRKGLGIAWRNPLYVIAIEDDGSVILGEENETYAESFSVIDVNYQGFAPLGEGESFECRVQVRYRHTPIRCRITKMNEDLVVNPLEEVRGVTPGQSAVFYPLNSDYLLLGGIIRKGSIRMQVAKEESAIAFRS.

Residues 9–16 and leucine 35 contribute to the ATP site; that span reads AMSGGVDS. Residue cysteine 105 is the Nucleophile of the active site. The cysteines at positions 105 and 201 are disulfide-linked. Position 129 (glycine 129) interacts with ATP. The interval 151-153 is interaction with tRNA; the sequence is KNQ. Catalysis depends on cysteine 201, which acts as the Cysteine persulfide intermediate. The segment at 307–308 is interaction with tRNA; the sequence is RY.

This sequence belongs to the MnmA/TRMU family.

Its subcellular location is the cytoplasm. It catalyses the reaction S-sulfanyl-L-cysteinyl-[protein] + uridine(34) in tRNA + AH2 + ATP = 2-thiouridine(34) in tRNA + L-cysteinyl-[protein] + A + AMP + diphosphate + H(+). Functionally, catalyzes the 2-thiolation of uridine at the wobble position (U34) of tRNA, leading to the formation of s(2)U34. The polypeptide is tRNA-specific 2-thiouridylase MnmA (Leptospira borgpetersenii serovar Hardjo-bovis (strain JB197)).